The sequence spans 364 residues: UDP-N-acetylglucosamine--N-acetylmuramyl-(pentapeptide) pyrophosphoryl-undecaprenol N-acetylglucosamine transferase (364 aa).

UDP-N-acetyl-alpha-D-glucosamine is bound by residues 15–17, N123, R164, S191, and Q286; that span reads TGG.

It belongs to the glycosyltransferase 28 family. MurG subfamily.

Its subcellular location is the cell inner membrane. It catalyses the reaction di-trans,octa-cis-undecaprenyl diphospho-N-acetyl-alpha-D-muramoyl-L-alanyl-D-glutamyl-meso-2,6-diaminopimeloyl-D-alanyl-D-alanine + UDP-N-acetyl-alpha-D-glucosamine = di-trans,octa-cis-undecaprenyl diphospho-[N-acetyl-alpha-D-glucosaminyl-(1-&gt;4)]-N-acetyl-alpha-D-muramoyl-L-alanyl-D-glutamyl-meso-2,6-diaminopimeloyl-D-alanyl-D-alanine + UDP + H(+). It functions in the pathway cell wall biogenesis; peptidoglycan biosynthesis. Cell wall formation. Catalyzes the transfer of a GlcNAc subunit on undecaprenyl-pyrophosphoryl-MurNAc-pentapeptide (lipid intermediate I) to form undecaprenyl-pyrophosphoryl-MurNAc-(pentapeptide)GlcNAc (lipid intermediate II). The chain is UDP-N-acetylglucosamine--N-acetylmuramyl-(pentapeptide) pyrophosphoryl-undecaprenol N-acetylglucosamine transferase from Prochlorococcus marinus (strain MIT 9515).